A 109-amino-acid chain; its full sequence is MSNSAPARQYLNEKVTPVLLEGMKILARDRPENPLQFLGQFLLDANANQQKQKEIVNQPEPQQETPKADADMSTPTMAEQVQTSFSNPASTPLTQTSSPSSNPGKNSAS.

The interval 49-109 is disordered; that stretch reads QQKQKEIVNQ…SSNPGKNSAS (61 aa). Over residues 73–87 the composition is skewed to polar residues; it reads STPTMAEQVQTSFSN. Residues 88 to 101 show a composition bias toward low complexity; that stretch reads PASTPLTQTSSPSS.

It belongs to the dpy-30 family. In terms of assembly, component of the COMPASS (Set1C) complex composed of ash2, sdc1, set1, shg1, spp1, swd1, swd2 and swd3. Component of the Lid2 complex composed of ash2, jmj3, lid2, sdc1 and snt2.

The protein localises to the nucleus. The COMPASS (Set1C) complex specifically mono-, di- and trimethylates histone H3 to form H3K4me1/2/3, which subsequently activates gene expression by regulating transcription elongation and plays a role in telomere length maintenance. The sequence is that of Set1 complex component sdc1 (sdc1) from Schizosaccharomyces pombe (strain 972 / ATCC 24843) (Fission yeast).